We begin with the raw amino-acid sequence, 98 residues long: Serine protease inhibitor Kazal-type 14 (98 aa).

The N-terminal stretch at 1 to 23 is a signal peptide; sequence MVKYFQVLWSLLFSIMLHSMLLA. A Kazal-like domain is found at 35–98; the sequence is GLIKIKCPYK…QIRYYHTGRC (64 aa). 3 cysteine pairs are disulfide-bonded: cysteine 41/cysteine 80, cysteine 58/cysteine 77, and cysteine 66/cysteine 98. N-linked (GlcNAc...) asparagine glycosylation occurs at asparagine 52.

The protein localises to the secreted. Its function is as follows. May be a serine protease inhibitor. The sequence is that of Serine protease inhibitor Kazal-type 14 (Spink14) from Rattus norvegicus (Rat).